Reading from the N-terminus, the 231-residue chain is NADH-ubiquinone oxidoreductase chain 4 (231 aa).

Transmembrane regions (helical) follow at residues 1–21 (PIAGSMVLAAILLKLGGYGII), 34–54 (MFLPFVVLALWGAILANLTCL), 61–80 (SLIAYSSVSHMGLVVAAIII), 85–107 (GLAGAMTLMIAHGFTSSALFCLA), 128–148 (ILPMATTWWLLTNLMNIAIPP), and 169–189 (TIILLGLSMLITASYSLHMFL).

Belongs to the complex I subunit 4 family.

It is found in the mitochondrion membrane. The catalysed reaction is a ubiquinone + NADH + 5 H(+)(in) = a ubiquinol + NAD(+) + 4 H(+)(out). Core subunit of the mitochondrial membrane respiratory chain NADH dehydrogenase (Complex I) that is believed to belong to the minimal assembly required for catalysis. Complex I functions in the transfer of electrons from NADH to the respiratory chain. The immediate electron acceptor for the enzyme is believed to be ubiquinone. The chain is NADH-ubiquinone oxidoreductase chain 4 (MT-ND4) from Gloydius blomhoffii (Mamushi).